The following is a 279-amino-acid chain: Urease accessory protein UreD (279 aa).

It belongs to the UreD family. As to quaternary structure, ureD, UreF and UreG form a complex that acts as a GTP-hydrolysis-dependent molecular chaperone, activating the urease apoprotein by helping to assemble the nickel containing metallocenter of UreC. The UreE protein probably delivers the nickel.

The protein resides in the cytoplasm. Its function is as follows. Required for maturation of urease via the functional incorporation of the urease nickel metallocenter. The polypeptide is Urease accessory protein UreD (Rhodopseudomonas palustris (strain HaA2)).